Here is a 439-residue protein sequence, read N- to C-terminus: Sodium-dependent phosphate transport protein 3 (439 aa).

N-linked (GlcNAc...) asparagine glycosylation is found at N47, N56, N68, and N69. A run of 9 helical transmembrane segments spans residues 98–118 (INYG…IFGA), 130–150 (SLLT…VIMV), 183–203 (TIAG…GGLI), 211–231 (FIFY…FTVI), 273–293 (LPLW…TIIL), 317–337 (LPFI…DFLL), 350–369 (LFSS…LPFV), 374–396 (VITI…GFII), and 415–435 (GFGL…ISQV).

It belongs to the major facilitator superfamily. Sodium/anion cotransporter family. As to expression, expressed in the small intestine, kidney, spleen and testis. Not detected in fetal brain, bone marrow, and mammary gland.

Its subcellular location is the apical cell membrane. The catalysed reaction is 3 Na(+)(out) + phosphate(out) = 3 Na(+)(in) + phosphate(in). It catalyses the reaction urate(out) + n chloride(in) = urate(in) + n chloride(out). Its function is as follows. Acts as a membrane potential-dependent organic anion transporter, the transport requires a low concentration of chloride ions. Mediates chloride-dependent transport of urate. Can actively transport inorganic phosphate into cells via Na(+) cotransport. The sequence is that of Sodium-dependent phosphate transport protein 3 (SLC17A2) from Homo sapiens (Human).